The following is a 273-amino-acid chain: Formamidopyrimidine-DNA glycosylase (273 aa).

The Schiff-base intermediate with DNA role is filled by Pro2. Residue Glu3 is the Proton donor of the active site. Lys58 serves as the catalytic Proton donor; for beta-elimination activity. DNA contacts are provided by His91, Arg110, and Arg153. The FPG-type zinc finger occupies Lys238–Lys272. The active-site Proton donor; for delta-elimination activity is Arg262.

Belongs to the FPG family. In terms of assembly, monomer. Zn(2+) is required as a cofactor.

The enzyme catalyses Hydrolysis of DNA containing ring-opened 7-methylguanine residues, releasing 2,6-diamino-4-hydroxy-5-(N-methyl)formamidopyrimidine.. The catalysed reaction is 2'-deoxyribonucleotide-(2'-deoxyribose 5'-phosphate)-2'-deoxyribonucleotide-DNA = a 3'-end 2'-deoxyribonucleotide-(2,3-dehydro-2,3-deoxyribose 5'-phosphate)-DNA + a 5'-end 5'-phospho-2'-deoxyribonucleoside-DNA + H(+). In terms of biological role, involved in base excision repair of DNA damaged by oxidation or by mutagenic agents. Acts as a DNA glycosylase that recognizes and removes damaged bases. Has a preference for oxidized purines, such as 7,8-dihydro-8-oxoguanine (8-oxoG). Has AP (apurinic/apyrimidinic) lyase activity and introduces nicks in the DNA strand. Cleaves the DNA backbone by beta-delta elimination to generate a single-strand break at the site of the removed base with both 3'- and 5'-phosphates. The sequence is that of Formamidopyrimidine-DNA glycosylase from Lactobacillus delbrueckii subsp. bulgaricus (strain ATCC 11842 / DSM 20081 / BCRC 10696 / JCM 1002 / NBRC 13953 / NCIMB 11778 / NCTC 12712 / WDCM 00102 / Lb 14).